Consider the following 43-residue polypeptide: Defensin (43 aa).

3 cysteine pairs are disulfide-bonded: C3-C34, C20-C39, and C24-C41.

This sequence belongs to the invertebrate defensin family. Type 1 subfamily.

It localises to the secreted. In terms of biological role, antibacterial peptide. Affects Gram-positive bacteria M.luteus, B.megaterium, A.viridans, S.aureus and S.saprophyticus. Moderate activity against P.acidilactici and B.subtilis QB935. Also affects Gram-negative bacterium, D22 form of E.coli. In Pyrrhocoris apterus (Sap sucking bug), this protein is Defensin.